The primary structure comprises 80 residues: MSKGQTLQEPFLNALRKERIPVSIYLVNGIKLQGQIDSFDQFVVLLKNTVSQMVYKHAISTIVPSRPVKLAMPEDMQPED.

The region spanning 9 to 68 (EPFLNALRKERIPVSIYLVNGIKLQGQIDSFDQFVVLLKNTVSQMVYKHAISTIVPSRPV) is the Sm domain.

This sequence belongs to the Hfq family. In terms of assembly, homohexamer.

RNA chaperone that binds small regulatory RNA (sRNAs) and mRNAs to facilitate mRNA translational regulation in response to envelope stress, environmental stress and changes in metabolite concentrations. Also binds with high specificity to tRNAs. This Thioalkalivibrio sulfidiphilus (strain HL-EbGR7) protein is RNA-binding protein Hfq.